A 190-amino-acid chain; its full sequence is Probable chorismate pyruvate-lyase (190 aa).

3 residues coordinate substrate: R74, L112, and E173.

This sequence belongs to the UbiC family.

Its subcellular location is the cytoplasm. The catalysed reaction is chorismate = 4-hydroxybenzoate + pyruvate. Its pathway is cofactor biosynthesis; ubiquinone biosynthesis. Functionally, removes the pyruvyl group from chorismate, with concomitant aromatization of the ring, to provide 4-hydroxybenzoate (4HB) for the ubiquinone pathway. The protein is Probable chorismate pyruvate-lyase of Bordetella bronchiseptica (strain ATCC BAA-588 / NCTC 13252 / RB50) (Alcaligenes bronchisepticus).